Reading from the N-terminus, the 158-residue chain is Transcription elongation factor GreA (158 aa).

This sequence belongs to the GreA/GreB family.

In terms of biological role, necessary for efficient RNA polymerase transcription elongation past template-encoded arresting sites. The arresting sites in DNA have the property of trapping a certain fraction of elongating RNA polymerases that pass through, resulting in locked ternary complexes. Cleavage of the nascent transcript by cleavage factors such as GreA or GreB allows the resumption of elongation from the new 3'terminus. GreA releases sequences of 2 to 3 nucleotides. This Hamiltonella defensa subsp. Acyrthosiphon pisum (strain 5AT) protein is Transcription elongation factor GreA.